A 510-amino-acid polypeptide reads, in one-letter code: Light-independent protochlorophyllide reductase subunit B (510 aa).

[4Fe-4S] cluster is bound at residue D36. The Proton donor role is filled by D297. Substrate is bound at residue 432-433 (GM).

This sequence belongs to the ChlB/BchB/BchZ family. In terms of assembly, protochlorophyllide reductase is composed of three subunits; ChlL, ChlN and ChlB. Forms a heterotetramer of two ChlB and two ChlN subunits. Requires [4Fe-4S] cluster as cofactor.

It localises to the plastid. The protein resides in the chloroplast. The catalysed reaction is chlorophyllide a + oxidized 2[4Fe-4S]-[ferredoxin] + 2 ADP + 2 phosphate = protochlorophyllide a + reduced 2[4Fe-4S]-[ferredoxin] + 2 ATP + 2 H2O. The protein operates within porphyrin-containing compound metabolism; chlorophyll biosynthesis (light-independent). Its function is as follows. Component of the dark-operative protochlorophyllide reductase (DPOR) that uses Mg-ATP and reduced ferredoxin to reduce ring D of protochlorophyllide (Pchlide) to form chlorophyllide a (Chlide). This reaction is light-independent. The NB-protein (ChlN-ChlB) is the catalytic component of the complex. The polypeptide is Light-independent protochlorophyllide reductase subunit B (Pinus thunbergii (Japanese black pine)).